The primary structure comprises 320 residues: Eukaryotic translation initiation factor 3 subunit G (320 aa).

Residues 1–59 (MPTGDFDSKPSWADQVEEEGEDDKCVTSELLKGIPLATGDTSPEPELLPGAPLPPPKEV) form a disordered region. Phosphoserine occurs at positions 8 and 11. Phosphothreonine occurs at positions 38 and 41. 4 positions are modified to phosphoserine: S42, S189, S223, and S264. The interval 209-234 (KTGKYVPPSLRDGASRRGESMQPNRR) is disordered. The span at 221-234 (GASRRGESMQPNRR) shows a compositional bias: basic and acidic residues. In terms of domain architecture, RRM spans 239-317 (ATIRVTNLSE…LILNVEWAKP (79 aa)).

In terms of assembly, component of the eukaryotic translation initiation factor 3 (eIF-3) complex, which is composed of 13 subunits: EIF3A, EIF3B, EIF3C, EIF3D, EIF3E, EIF3F, EIF3G, EIF3H, EIF3I, EIF3J, EIF3K, EIF3L and EIF3M. The eIF-3 complex appears to include 3 stable modules: module A is composed of EIF3A, EIF3B, EIF3G and EIF3I; module B is composed of EIF3F, EIF3H, and EIF3M; and module C is composed of EIF3C, EIF3D, EIF3E, EIF3K and EIF3L. EIF3C of module C binds EIF3B of module A and EIF3H of module B, thereby linking the three modules. EIF3J is a labile subunit that binds to the eIF-3 complex via EIF3B. The eIF-3 complex interacts with RPS6KB1 under conditions of nutrient depletion. Mitogenic stimulation leads to binding and activation of a complex composed of MTOR and RPTOR, leading to phosphorylation and release of RPS6KB1 and binding of EIF4B to eIF-3. Interacts (via C-terminus) with AIFM1 (via N-terminus). Interacts with DHX33; the interaction is independent of RNA. Phosphorylated. Phosphorylation is enhanced upon serum stimulation.

Its subcellular location is the cytoplasm. The protein localises to the nucleus. The protein resides in the perinuclear region. Its function is as follows. RNA-binding component of the eukaryotic translation initiation factor 3 (eIF-3) complex, which is required for several steps in the initiation of protein synthesis. The eIF-3 complex associates with the 40S ribosome and facilitates the recruitment of eIF-1, eIF-1A, eIF-2:GTP:methionyl-tRNAi and eIF-5 to form the 43S pre-initiation complex (43S PIC). The eIF-3 complex stimulates mRNA recruitment to the 43S PIC and scanning of the mRNA for AUG recognition. The eIF-3 complex is also required for disassembly and recycling of post-termination ribosomal complexes and subsequently prevents premature joining of the 40S and 60S ribosomal subunits prior to initiation. The eIF-3 complex specifically targets and initiates translation of a subset of mRNAs involved in cell proliferation, including cell cycling, differentiation and apoptosis, and uses different modes of RNA stem-loop binding to exert either translational activation or repression. This subunit can bind 18S rRNA. Functionally, (Microbial infection) In case of FCV infection, plays a role in the ribosomal termination-reinitiation event leading to the translation of VP2. This Homo sapiens (Human) protein is Eukaryotic translation initiation factor 3 subunit G.